The primary structure comprises 216 residues: Imidazole glycerol phosphate synthase subunit HisH (216 aa).

In terms of domain architecture, Glutamine amidotransferase type-1 spans 5–213 (RLAVIDYDAG…VEFVARRLPA (209 aa)). The active-site Nucleophile is the Cys83. Catalysis depends on residues His188 and Glu190.

Heterodimer of HisH and HisF.

It is found in the cytoplasm. The enzyme catalyses 5-[(5-phospho-1-deoxy-D-ribulos-1-ylimino)methylamino]-1-(5-phospho-beta-D-ribosyl)imidazole-4-carboxamide + L-glutamine = D-erythro-1-(imidazol-4-yl)glycerol 3-phosphate + 5-amino-1-(5-phospho-beta-D-ribosyl)imidazole-4-carboxamide + L-glutamate + H(+). The catalysed reaction is L-glutamine + H2O = L-glutamate + NH4(+). The protein operates within amino-acid biosynthesis; L-histidine biosynthesis; L-histidine from 5-phospho-alpha-D-ribose 1-diphosphate: step 5/9. Its function is as follows. IGPS catalyzes the conversion of PRFAR and glutamine to IGP, AICAR and glutamate. The HisH subunit catalyzes the hydrolysis of glutamine to glutamate and ammonia as part of the synthesis of IGP and AICAR. The resulting ammonia molecule is channeled to the active site of HisF. This is Imidazole glycerol phosphate synthase subunit HisH from Synechococcus sp. (strain JA-3-3Ab) (Cyanobacteria bacterium Yellowstone A-Prime).